We begin with the raw amino-acid sequence, 157 residues long: Protein Smg (157 aa).

This sequence belongs to the Smg family.

The chain is Protein Smg from Pectobacterium atrosepticum (strain SCRI 1043 / ATCC BAA-672) (Erwinia carotovora subsp. atroseptica).